The chain runs to 126 residues: Antimicrobial protein 1 (126 aa).

The signal sequence occupies residues 1-24 (MRSSLLLGLTVVLLLGVTVPPCMA).

As to expression, strongly expressed in gills, hemocytes and reproductive tract, with weaker expression in muscle, heart and digestive tract. Not detected in eyes and hepatopancreas (at protein level).

Its subcellular location is the secreted. Its function is as follows. Has antibacterial activity against the Gram-positive bacteria E.coli (MIC&lt;50 ug/ml) and P.aeruginosa (MIC&lt;25 ug/ml), and the Gram-negative bacteria S.aureus (MIC&lt;100 ug/ml) and S.pyogenes (MIC&lt;50 ug/ml). The chain is Antimicrobial protein 1 from Scylla serrata (Mud crab).